A 452-amino-acid chain; its full sequence is uncharacterized protein (452 aa).

The protein resides in the cytoplasm. It localises to the nucleus. This is an uncharacterized protein from Schizosaccharomyces pombe (strain 972 / ATCC 24843) (Fission yeast).